Reading from the N-terminus, the 473-residue chain is SHC-transforming protein 1 (473 aa).

The disordered stretch occupies residues 1–26 (MNKLSGGGGRRTRVEGGQLGGEEWTR). Ser-29 carries the post-translational modification Phosphoserine. Lys-44 is modified (N6-acetyllysine). In terms of domain architecture, PID spans 46 to 229 (MGPGVSYLVR…AGFDGSAWDE (184 aa)). The interval 216 to 314 (HDRMAGFDGS…PSSGRELFDD (99 aa)) is disordered. The interval 230–377 (EEEEPPDHQY…AMAEQLRGEP (148 aa)) is CH1. Residues Tyr-239, Tyr-240, and Tyr-317 each carry the phosphotyrosine modification. A disordered region spans residues 328 to 348 (QAGAGAGPPNPTINGSAPRDL). Ser-343 carries the post-translational modification Phosphoserine. Residues 378-469 (WFHGKLSRRE…GSELCLQQPV (92 aa)) form the SH2 domain.

As to quaternary structure, interacts with CPNE3; this interaction may mediate the binding of CPNE3 with ERBB2. Interacts with the Trk receptors NTRK1, NTRK2 and NTRK3; in a phosphotyrosine-dependent manner. Interacts with the NPXY motif of tyrosine-phosphorylated IGF1R and INSR in vitro via the PID domain. Once activated, binds to GRB2. Interacts with tyrosine-phosphorylated CD3T and DDR2. Interacts with the N-terminal region of APS. Interacts with phosphorylated LRP1 and IRS4. Interacts with INPP5D/SHIP1 and INPPL1/SHIP2. Interacts with ALK, GAB2, GRB7 and KIT. Interacts with PTPN6/SHP (tyrosine phosphorylated). Identified in a complex containing FGFR4, NCAM1, CDH2, PLCG1, FRS2, SRC, SHC1, GAP43 and CTTN. Interacts with FLT4 (tyrosine-phosphorylated). Interacts with EPHB1 and GRB2; activates the MAPK/ERK cascade to regulate cell migration. Interacts with PDGFRB (tyrosine-phosphorylated). Interacts with ERBB4. Interacts with TEK/TIE2 (tyrosine-phosphorylated). Interacts with PTK2/FAK1. Interacts with CEACAM1; this interaction is CEACAM1-phosphorylation-dependent and mediates interaction with EGFR or INSR resulting in decrease coupling of SHC1 to the MAPK3/ERK1-MAPK1/ERK2 pathway. Interacts (via PID domain) with PEAK1 (when phosphorylated). Found in a complex with PPP1CA, PPP1CC, SHC1 and PEAK1. Post-translationally, phosphorylated by activated epidermal growth factor receptor. Phosphorylated in response to KIT signaling. Tyrosine phosphorylated in response to FLT3 and FLT4 signaling and by ligand-activated ALK. Tyrosine phosphorylated by ligand-activated PDGFRB. Tyrosine phosphorylated by TEK/TIE2. May be tyrosine phosphorylated by activated PTK2/FAK1. Tyrosine phosphorylated by activated PTK2B/PYK2. Dephosphorylation by PTPN2 may regulate interaction with GRB2.

It localises to the cytoplasm. It is found in the cell junction. The protein resides in the focal adhesion. Functionally, signaling adapter that couples activated growth factor receptors to signaling pathways. Participates in a signaling cascade initiated by activated KIT and KITLG/SCF. Participates in signaling downstream of the angiopoietin receptor TEK/TIE2, and plays a role in the regulation of endothelial cell migration and sprouting angiogenesis. This Bos taurus (Bovine) protein is SHC-transforming protein 1 (SHC1).